Here is a 294-residue protein sequence, read N- to C-terminus: MHNIFKGLITALITPFKDNKLDLYALERIIKHQIKHEVDAVLIAGSTGESSSLSFEEYKLLLQTSVEIVNKCIPIISGCSSNNTTYARALAAESTKIGVDGFMASPPSYVKPTQHGIYKHFEALHEVCNLPIMLYSAPTRSGVDFSDETILRLSKLPRILALKDCGVDLERPLRIRATVKKDFNILTGNDEVVLAFNAQGGVGWTSVASNIVPNICKELLEKWNKNDTKGALEIHQKLLPLYTALFVESNPIPIKYAAHYLGLCENEIRPPLTEASDSAKKQIENIITSLSIKI.

Threonine 47 contributes to the pyruvate binding site. The Proton donor/acceptor role is filled by tyrosine 135. Residue lysine 163 is the Schiff-base intermediate with substrate of the active site. Threonine 205 is a binding site for pyruvate.

It belongs to the DapA family. As to quaternary structure, homotetramer; dimer of dimers.

It localises to the cytoplasm. It catalyses the reaction L-aspartate 4-semialdehyde + pyruvate = (2S,4S)-4-hydroxy-2,3,4,5-tetrahydrodipicolinate + H2O + H(+). It functions in the pathway amino-acid biosynthesis; L-lysine biosynthesis via DAP pathway; (S)-tetrahydrodipicolinate from L-aspartate: step 3/4. In terms of biological role, catalyzes the condensation of (S)-aspartate-beta-semialdehyde [(S)-ASA] and pyruvate to 4-hydroxy-tetrahydrodipicolinate (HTPA). This chain is 4-hydroxy-tetrahydrodipicolinate synthase, found in Rickettsia montanensis.